Here is a 78-residue protein sequence, read N- to C-terminus: UPF0270 protein IL0325 (78 aa).

It belongs to the UPF0270 family.

The chain is UPF0270 protein IL0325 from Idiomarina loihiensis (strain ATCC BAA-735 / DSM 15497 / L2-TR).